A 268-amino-acid polypeptide reads, in one-letter code: Octanoyltransferase (268 aa).

The BPL/LPL catalytic domain maps to 73-261 (GEADELVWLL…AFEEVFGPAV (189 aa)). Residues 112–119 (RGGEYTYH), 192–194 (ALG), and 205–207 (GLS) contribute to the substrate site. The active-site Acyl-thioester intermediate is C223.

The protein belongs to the LipB family.

Its subcellular location is the cytoplasm. The catalysed reaction is octanoyl-[ACP] + L-lysyl-[protein] = N(6)-octanoyl-L-lysyl-[protein] + holo-[ACP] + H(+). The protein operates within protein modification; protein lipoylation via endogenous pathway; protein N(6)-(lipoyl)lysine from octanoyl-[acyl-carrier-protein]: step 1/2. Catalyzes the transfer of endogenously produced octanoic acid from octanoyl-acyl-carrier-protein onto the lipoyl domains of lipoate-dependent enzymes. Lipoyl-ACP can also act as a substrate although octanoyl-ACP is likely to be the physiological substrate. This chain is Octanoyltransferase, found in Agrobacterium fabrum (strain C58 / ATCC 33970) (Agrobacterium tumefaciens (strain C58)).